The sequence spans 240 residues: UDP-2,3-diacylglucosamine hydrolase (240 aa).

Residues Asp9, His11, Asp43, Asn81, and His116 each contribute to the Mn(2+) site. 81 to 82 (NR) lines the substrate pocket. Asp124, Ser162, Lys166, Lys169, and His197 together coordinate substrate. Mn(2+) is bound by residues His197 and His199.

It belongs to the LpxH family. Mn(2+) serves as cofactor.

It is found in the cell inner membrane. It catalyses the reaction UDP-2-N,3-O-bis[(3R)-3-hydroxytetradecanoyl]-alpha-D-glucosamine + H2O = 2-N,3-O-bis[(3R)-3-hydroxytetradecanoyl]-alpha-D-glucosaminyl 1-phosphate + UMP + 2 H(+). Its pathway is glycolipid biosynthesis; lipid IV(A) biosynthesis; lipid IV(A) from (3R)-3-hydroxytetradecanoyl-[acyl-carrier-protein] and UDP-N-acetyl-alpha-D-glucosamine: step 4/6. Hydrolyzes the pyrophosphate bond of UDP-2,3-diacylglucosamine to yield 2,3-diacylglucosamine 1-phosphate (lipid X) and UMP by catalyzing the attack of water at the alpha-P atom. Involved in the biosynthesis of lipid A, a phosphorylated glycolipid that anchors the lipopolysaccharide to the outer membrane of the cell. The sequence is that of UDP-2,3-diacylglucosamine hydrolase from Neisseria meningitidis serogroup B (strain ATCC BAA-335 / MC58).